The following is a 251-amino-acid chain: Capsid protein (251 aa).

Positions 3-20 (KRDAPWRLMAGTSKVSRS) match the Bipartite nuclear localization signal motif. A Nuclear localization signal motif is present at residues 35–49 (KAAAWVNRPMYRKPR). A zinc finger spans residues 63-80 (CEGPCKVQSYEQRHDISH). The short motif at 96 to 117 (ITHRVGKRFCVKSVYILGKIWM) is the Nuclear export signal element. The Bipartite nuclear localization signal motif lies at 195 to 242 (RRFWKVNNHVVYNHQEAGKYENHTENALLLYMACTHASNPVYATLKIR).

It belongs to the geminiviridae capsid protein family. In terms of assembly, homomultimer. Binds to single-stranded and double-stranded viral DNA. Interacts (via nuclear localization signals) with host importin alpha-1a.

The protein localises to the virion. The protein resides in the host nucleus. Functionally, encapsidates the viral DNA into characteristic twinned ('geminate') particles. Binds the genomic viral ssDNA and shuttles it into and out of the cell nucleus. The CP of bipartite geminiviruses is not required for cell-to-cell or systemic movement. The sequence is that of Capsid protein from Squash leaf curl virus (SLCV).